A 403-amino-acid polypeptide reads, in one-letter code: MSTFNRIHLVVLDSVGIGAAPDANNFSNAGVPDGASDTLGHISKTVGLNVPNMAKIGLGNIPRDTPLKTVPAENHPTGYVTKLEEVSLGKDTMTGHWEIMGLNITEPFDTFWNGFPEEIISKIEKFSGRKVIREANKPYSGTAVIDDFGPRQMETGELIIYTSADPVLQIAAHEDVIPLDELYRICEYARSITLERPALLGRIIARPYVGKPRNFTRTANRHDYALSPFAPTVLNKLADAGVSTYAVGKINDIFNGSGITNDMGHNKSNSHGVDTLIKTMGLSAFTKGFSFTNLVDFDALYGHRRNAHGYRDCLHEFDERLPEIIAAMKVDDLLLITADHGNDPTYAGTDHTREYVPLLAYSPSFTGNGVLPVGHYADISATIADNFGVDTAMIGESFLDKLI.

Mn(2+) is bound by residues aspartate 13, aspartate 298, histidine 303, aspartate 339, histidine 340, and histidine 351.

The protein belongs to the phosphopentomutase family. The cofactor is Mn(2+).

The protein localises to the cytoplasm. The enzyme catalyses 2-deoxy-alpha-D-ribose 1-phosphate = 2-deoxy-D-ribose 5-phosphate. It catalyses the reaction alpha-D-ribose 1-phosphate = D-ribose 5-phosphate. It participates in carbohydrate degradation; 2-deoxy-D-ribose 1-phosphate degradation; D-glyceraldehyde 3-phosphate and acetaldehyde from 2-deoxy-alpha-D-ribose 1-phosphate: step 1/2. Functionally, isomerase that catalyzes the conversion of deoxy-ribose 1-phosphate (dRib-1-P) and ribose 1-phosphate (Rib-1-P) to deoxy-ribose 5-phosphate (dRib-5-P) and ribose 5-phosphate (Rib-5-P), respectively. In Streptococcus mutans serotype c (strain ATCC 700610 / UA159), this protein is Phosphopentomutase.